Reading from the N-terminus, the 412-residue chain is Tyrosine--tRNA ligase (412 aa).

Residues 50–59 carry the 'HIGH' region motif; sequence PTGTDIHLGH. Residues 244 to 248 carry the 'KMSKS' region motif; that stretch reads KMSKS. Residue Lys-247 participates in ATP binding. In terms of domain architecture, S4 RNA-binding spans 348-411; the sequence is VKFFYLLSSL…IGKKIIKRFE (64 aa).

The protein belongs to the class-I aminoacyl-tRNA synthetase family. TyrS type 2 subfamily. As to quaternary structure, homodimer.

The protein resides in the cytoplasm. The catalysed reaction is tRNA(Tyr) + L-tyrosine + ATP = L-tyrosyl-tRNA(Tyr) + AMP + diphosphate + H(+). Catalyzes the attachment of tyrosine to tRNA(Tyr) in a two-step reaction: tyrosine is first activated by ATP to form Tyr-AMP and then transferred to the acceptor end of tRNA(Tyr). The polypeptide is Tyrosine--tRNA ligase (Prochlorococcus marinus (strain MIT 9312)).